Consider the following 415-residue polypeptide: Gamma-glutamyl phosphate reductase (415 aa).

Belongs to the gamma-glutamyl phosphate reductase family.

It is found in the cytoplasm. It carries out the reaction L-glutamate 5-semialdehyde + phosphate + NADP(+) = L-glutamyl 5-phosphate + NADPH + H(+). It participates in amino-acid biosynthesis; L-proline biosynthesis; L-glutamate 5-semialdehyde from L-glutamate: step 2/2. In terms of biological role, catalyzes the NADPH-dependent reduction of L-glutamate 5-phosphate into L-glutamate 5-semialdehyde and phosphate. The product spontaneously undergoes cyclization to form 1-pyrroline-5-carboxylate. The polypeptide is Gamma-glutamyl phosphate reductase (Shouchella clausii (strain KSM-K16) (Alkalihalobacillus clausii)).